Here is a 783-residue protein sequence, read N- to C-terminus: Isoamylase 1, chloroplastic (783 aa).

A chloroplast-targeting transit peptide spans 1–43 (MDAIKCSSSFLHHTKLNTLFSNHTFPKISAPNFKPLFRPISIS). Aspartate 410 (nucleophile) is an active-site residue. Residue glutamate 466 is the Proton donor of the active site.

This sequence belongs to the glycosyl hydrolase 13 family. Associates with ISA2 to form the heteromultimeric complex Iso1 required for amylopectin synthesis.

It is found in the plastid. It localises to the chloroplast. It catalyses the reaction Hydrolysis of (1-&gt;6)-alpha-D-glucosidic branch linkages in glycogen, amylopectin and their beta-limit dextrins.. It participates in glycan biosynthesis; starch biosynthesis. Its function is as follows. Involved in the trimming of pre-amylopectin chains. Accelerates the crystallization of nascent amylopectin molecules during starch synthesis. ISA1 and ISA2 work exclusively together as a multimeric holoenzyme. ISA1-ISA2 removes preferentially branches that are very close to other branches. Promotes negative gravitropic responses in shoots by facilitating starch granules (statoliths) formation in hypocotyls. This is Isoamylase 1, chloroplastic from Arabidopsis thaliana (Mouse-ear cress).